A 347-amino-acid chain; its full sequence is uncharacterized protein (347 aa).

Topologically, residues 1–44 are cytoplasmic; the sequence is MWNPKKKSEALAKFKSFPYPKPGTSNVLDSKEGDTRRKYFTKTH. A helical; Signal-anchor for type II membrane protein transmembrane segment spans residues 45-62; the sequence is LHRLFVFVVLLLCSGYFL. Residues 63 to 347 lie on the Lumenal side of the membrane; the sequence is KHTLLTRPKE…RGWRKLVPFL (285 aa).

This sequence belongs to the glycosyltransferase 34 family.

The protein localises to the endoplasmic reticulum membrane. This is an uncharacterized protein from Schizosaccharomyces pombe (strain 972 / ATCC 24843) (Fission yeast).